The following is a 362-amino-acid chain: Peptide chain release factor 1 (362 aa).

An N5-methylglutamine modification is found at Gln-235.

The protein belongs to the prokaryotic/mitochondrial release factor family. In terms of processing, methylated by PrmC. Methylation increases the termination efficiency of RF1.

The protein localises to the cytoplasm. Functionally, peptide chain release factor 1 directs the termination of translation in response to the peptide chain termination codons UAG and UAA. This chain is Peptide chain release factor 1, found in Acinetobacter baumannii (strain ACICU).